We begin with the raw amino-acid sequence, 316 residues long: Serpentine receptor class delta-45 (316 aa).

7 helical membrane passes run 8-28 (VFYP…IFII), 42-62 (ILLV…LIQI), 91-111 (YFLT…TIYL), 128-148 (VTFF…SLIL), 184-204 (IIIT…GLLL), 234-254 (LQVF…LVLA), and 266-286 (FFSV…LYSV).

Belongs to the nematode receptor-like protein srd family.

Its subcellular location is the membrane. The protein is Serpentine receptor class delta-45 (srd-45) of Caenorhabditis elegans.